Consider the following 156-residue polypeptide: Small ribosomal subunit protein uS7 (156 aa).

The protein belongs to the universal ribosomal protein uS7 family. In terms of assembly, part of the 30S ribosomal subunit. Contacts proteins S9 and S11.

In terms of biological role, one of the primary rRNA binding proteins, it binds directly to 16S rRNA where it nucleates assembly of the head domain of the 30S subunit. Is located at the subunit interface close to the decoding center, probably blocks exit of the E-site tRNA. The polypeptide is Small ribosomal subunit protein uS7 (Shewanella woodyi (strain ATCC 51908 / MS32)).